A 120-amino-acid chain; its full sequence is Peptidyl-tRNA hydrolase (120 aa).

Belongs to the PTH2 family.

Its subcellular location is the cytoplasm. It carries out the reaction an N-acyl-L-alpha-aminoacyl-tRNA + H2O = an N-acyl-L-amino acid + a tRNA + H(+). In terms of biological role, the natural substrate for this enzyme may be peptidyl-tRNAs which drop off the ribosome during protein synthesis. The polypeptide is Peptidyl-tRNA hydrolase (Pyrobaculum aerophilum (strain ATCC 51768 / DSM 7523 / JCM 9630 / CIP 104966 / NBRC 100827 / IM2)).